Here is a 334-residue protein sequence, read N- to C-terminus: Serine/threonine-protein kinase SAPK3 (334 aa).

The 257-residue stretch at 5 to 261 (YEALKELGAG…IPEIKKHTWF (257 aa)) folds into the Protein kinase domain. Residues 11-19 (LGAGNFGVA) and lysine 34 each bind ATP. The active-site Proton acceptor is aspartate 124.

It belongs to the protein kinase superfamily. Ser/Thr protein kinase family. Autophosphorylated in presence of Ca(2+). Expressed in leaves and maturing seeds, but not in roots and stems of field-grown plants.

Its subcellular location is the cytoplasm. The protein resides in the nucleus. It catalyses the reaction L-seryl-[protein] + ATP = O-phospho-L-seryl-[protein] + ADP + H(+). It carries out the reaction L-threonyl-[protein] + ATP = O-phospho-L-threonyl-[protein] + ADP + H(+). Its activity is regulated as follows. Activated by phosphorylation. Its function is as follows. May play a role in signal transduction of hyperosmotic response. The protein is Serine/threonine-protein kinase SAPK3 (SAPK3) of Oryza sativa subsp. indica (Rice).